The primary structure comprises 319 residues: HTH-type transcriptional regulator YidZ (319 aa).

The region spanning 8-65 (LDLNLLLCLQLLMQERSVTKAAKRMNVTPSAVSKSLAKLRAWFDDPLFVNSPLGLSPT) is the HTH lysR-type domain. Positions 25 to 44 (VTKAAKRMNVTPSAVSKSLA) form a DNA-binding region, H-T-H motif.

It belongs to the LysR transcriptional regulatory family.

Involved in anaerobic NO protection. The protein is HTH-type transcriptional regulator YidZ of Escherichia coli O157:H7 (strain EC4115 / EHEC).